A 1050-amino-acid polypeptide reads, in one-letter code: MWLRQSSGGGVASAGHGGPLRQRPIDAATDCDPRACYDSFCKHWQQAFEIIQHSAPPSHDDVLGVVSHLDYMVTLLLVELHHCNKVSLPAAEASGPPAAPCLEFLLSENLLDKLYEWACTTGRYANAVRLEQLKLYELLVSHSRHQLLCHEPFLRPLLKILASSQGEIFPPDLEKRLVILLNQLCVVLMQNVHLLDLFFFSAQTQVQEQILNGNVAPPKSGTTTNFIIFSLLIPYVHREGSLGHQARDALLLCMALSQKNSNIGTYIAQYSSICPLLVTGLGGLYSRLPNSIEISSIDWHRITPDDVTEIPELTLFMNALEFCNAVVQVAHEMIKQQLLDFMYQGFIVPVLGPAILQTLKGKHFQTNIDSQISAMSYLDLILRSITEPGLLRAFVRFLLDTEKFDGERILDALVERLNSPDANLCMVTMALFDTLLGLHCEDLMLELLLKFMLPGKHVPISHRHKINKIDPYLNSSEFFLDLSPDVMKRARDLARPKSVHEPVVSDLTPLPSLPSPVMSKTIGANWNYYGVHTGDSLYANIQAYLFEAHWRIAQCQRDCLKWANSYRYQKWPRHGQGRVHAHALELARQFFSEFGGGPIAANETSEKQLDSLQSIGESSGYESFKWRPADEESEATDTTLATTASEADLDHNSSSLSSVLGASSKREAWRTSNNNRNELILTDLEFSEDLFAQGTVSLGPFLNAIWGKLQTFTSNSLYVNLHLTGLITRLAWYPLPLIHSLLLRSDIAITSDTPSFHQVLRILKQQIDAELPVTEDSLEIIDVARSSLIDREFRLANARKGNEGSPMHHSQQQQMATNSGQQQGQLRSAYATLSAATPVQATPTSAYDPFKRSDNKRRSISKSITSMFSRKSASNTSTTPPNGSSASSGLSQIYAFFTGAASNLVGTNASTDGRGMSHAQTSAGTCETSLSTQPQAGAPRTGAIATSATASGSNSSIAGSTLTLSAQSNTTTHSASTLHGLDGGPSTGGFNSEPASLDSVASMGIIASTSGTERSRDLALCAVLMDEWLKELAAIAQEQSVVLVTEQGSL.

A phosphoserine mark is found at Ser-498 and Ser-805. 4 disordered regions span residues 800 to 827 (KGNE…GQLR), 865 to 888 (TSMF…SASS), 911 to 954 (TDGR…SGSN), and 968 to 995 (SNTT…SEPA). The segment covering 808-826 (HHSQQQQMATNSGQQQGQL) has biased composition (polar residues). The segment covering 872–888 (SASNTSTTPPNGSSASS) has biased composition (low complexity). The segment covering 918 to 935 (HAQTSAGTCETSLSTQPQ) has biased composition (polar residues). Residues 941-954 (TGAIATSATASGSN) are compositionally biased toward low complexity. A compositionally biased stretch (polar residues) spans 968–977 (SNTTTHSAST).

It belongs to the FHIP family.

The protein is FHIP family protein GE18198 of Drosophila yakuba (Fruit fly).